The chain runs to 156 residues: SsrA-binding protein (156 aa).

This sequence belongs to the SmpB family.

The protein localises to the cytoplasm. Functionally, required for rescue of stalled ribosomes mediated by trans-translation. Binds to transfer-messenger RNA (tmRNA), required for stable association of tmRNA with ribosomes. tmRNA and SmpB together mimic tRNA shape, replacing the anticodon stem-loop with SmpB. tmRNA is encoded by the ssrA gene; the 2 termini fold to resemble tRNA(Ala) and it encodes a 'tag peptide', a short internal open reading frame. During trans-translation Ala-aminoacylated tmRNA acts like a tRNA, entering the A-site of stalled ribosomes, displacing the stalled mRNA. The ribosome then switches to translate the ORF on the tmRNA; the nascent peptide is terminated with the 'tag peptide' encoded by the tmRNA and targeted for degradation. The ribosome is freed to recommence translation, which seems to be the essential function of trans-translation. This is SsrA-binding protein from Desulfitobacterium hafniense (strain DSM 10664 / DCB-2).